The primary structure comprises 613 residues: MEEQLYLDAEGPLLPLHTSISLFLMSYCDCKTWKIFLVLPDSKANNLSKNILLPRNLELETICKCDLPPLVRGCRLPAVVEASGAFCRAGLAVVLRHITHKAHIAEPSRNDIIELLGFKKTCLKACAEVSQWTRLCEISIPRAIESFLKKPSATIPTEVLQFEKKLGEPVKVHNDDKIRRQKLQQQMTANTNEAVDAKSNTAKTMPCFDIITNKTSLELGAALSKLTVQGALSRATREPSHIRKAKNSDLPPLEHVFAEGLYFTLTDVVLLPCIHAFLVALSNVAEEKCSELPLIAAWYKRVQQVPGVRFAASMCNITFLDILCENAKPQKMLSTFDSETEEKEIQDSNFVGGPRPTMTKLKELGIEAIFSSHPCPSWAIDWESLPAAASPAEGKMSSERAVRKQQQLNNLLSVVTNIAKPGDTIVDFCSGGGHVGIVLAHKLPSCQVILIENKEESLLRAKERCSELGLINIWFIQANLDYFTGSFTIGVALHACGVATDMVMDHCIKARAAFAISPCCYGFIQNTVKTSFPRSCRFQEALNYKEHMILCRFADQTAVQLPAERRQIGKQCMGLVDLDRAWAAEQNKYKVQVITMEPESCSPKNNMIVGSPI.

In terms of domain architecture, GST C-terminal spans 116 to 312; that stretch reads LGFKKTCLKA…QQVPGVRFAA (197 aa).

It belongs to the GSTCD family.

It localises to the cytoplasm. This is Glutathione S-transferase C-terminal domain-containing protein (gstcd) from Xenopus laevis (African clawed frog).